Consider the following 370-residue polypeptide: MPQEESAPRMDTPSSEEPLDKQNRKLEDQEEEMGFKELDGLREALANLRGLSEEDKSERAMLCSRIQEQSQLICILKRRSDEALERCQTLELLNTELEEKRLLEAEELKAKNQQAQKLEERFMTLASNHELMIRFKDEHKRQNAKLREENEKLRLENDQLFSPALKAQEAKVVQLTAQSEALAKELETLQRKYAHDVCQAQAREQELLELQNRQACAHTEETEQLRMQLQSLQQQQQEALQQTAKAEQAHSQQNQELRARLQTVTREKEELLLLSMERGRVLQNKQAEIRQLEEKLKMADVARRHALERFEQEAVAVNSNLRVRELQRRVDGIQAAYDELRLQSEAFKKHSLDLLSKERELNAKLRHLFP.

Positions 1-38 are disordered; that stretch reads MPQEESAPRMDTPSSEEPLDKQNRKLEDQEEEMGFKEL. Residue threonine 12 is modified to Phosphothreonine. The span at 18–38 shows a compositional bias: basic and acidic residues; the sequence is PLDKQNRKLEDQEEEMGFKEL. Positions 19–346 form a coiled coil; the sequence is LDKQNRKLED…YDELRLQSEA (328 aa).

The protein belongs to the CCDC89 family. In terms of assembly, interacts with HEY1.

It localises to the cytoplasm. The protein localises to the nucleus. The protein is Coiled-coil domain-containing protein 89 of Bos taurus (Bovine).